Consider the following 320-residue polypeptide: Putative movement protein (320 aa).

Residues His-144, Asp-171, and Ser-199 contribute to the active site. The tract at residues 251–320 (RRSRSISAKR…GKGNSDGSSP (70 aa)) is disordered. The segment covering 278 to 289 (RIERFGKDEFGR) has biased composition (basic and acidic residues).

The protein belongs to the tobamoviruses movement protein family.

May play a role in viral cell to cell movement by increasing the size exclusion limit of plasmodesmata and forming a complex with viral RNA to assist its movement. May also have a papain-like protease activity and cleave the genome polyprotein. The protein is Putative movement protein of Malus sylvestris (European crab apple).